Reading from the N-terminus, the 845-residue chain is Protein P (845 aa).

Residues 1–179 (MPLSYQHFRK…FCGSPYSWEQ (179 aa)) are terminal protein domain (TP). The spacer stretch occupies residues 180–348 (ELHHGRSVTK…YCLSHLVNLL (169 aa)). 3 disordered regions span residues 186-205 (SVTK…QPSG), 222-245 (QPRL…SGSI), and 288-318 (YSHL…RSQS). Residues 289 to 301 (SHLSTSKRQSSSG) are compositionally biased toward polar residues. Residues 349-692 (EDWGPCADHG…YMNLYPVARQ (344 aa)) are polymerase/reverse transcriptase domain (RT). One can recognise a Reverse transcriptase domain in the interval 359–602 (EHHIRIPRTP…YSLNFMGYII (244 aa)). Asp-431, Asp-553, and Asp-554 together coordinate Mg(2+).

It belongs to the hepadnaviridae P protein family.

The enzyme catalyses DNA(n) + a 2'-deoxyribonucleoside 5'-triphosphate = DNA(n+1) + diphosphate. It catalyses the reaction Endonucleolytic cleavage to 5'-phosphomonoester.. With respect to regulation, activated by host HSP70 and HSP40 in vitro to be able to bind the epsilon loop of the pgRNA. Because deletion of the RNase H region renders the protein partly chaperone-independent, the chaperones may be needed indirectly to relieve occlusion of the RNA-binding site by this domain. Inhibited by several reverse-transcriptase inhibitors: Lamivudine, Adefovir and Entecavir. Its function is as follows. Multifunctional enzyme that converts the viral RNA genome into dsDNA in viral cytoplasmic capsids. This enzyme displays a DNA polymerase activity that can copy either DNA or RNA templates, and a ribonuclease H (RNase H) activity that cleaves the RNA strand of RNA-DNA heteroduplexes in a partially processive 3'- to 5'-endonucleasic mode. Neo-synthesized pregenomic RNA (pgRNA) are encapsidated together with the P protein, and reverse-transcribed inside the nucleocapsid. Initiation of reverse-transcription occurs first by binding the epsilon loop on the pgRNA genome, and is initiated by protein priming, thereby the 5'-end of (-)DNA is covalently linked to P protein. Partial (+)DNA is synthesized from the (-)DNA template and generates the relaxed circular DNA (RC-DNA) genome. After budding and infection, the RC-DNA migrates in the nucleus, and is converted into a plasmid-like covalently closed circular DNA (cccDNA). The activity of P protein does not seem to be necessary for cccDNA generation, and is presumably released from (+)DNA by host nuclear DNA repair machinery. This chain is Protein P, found in Hepatitis B virus genotype A3 (isolate Cameroon/CMR711/1994) (HBV-A).